We begin with the raw amino-acid sequence, 130 residues long: Phosphoribosyl-AMP cyclohydrolase (130 aa).

A Mg(2+)-binding site is contributed by D78. C79 is a Zn(2+) binding site. 2 residues coordinate Mg(2+): D80 and D82. C96 and C103 together coordinate Zn(2+).

The protein belongs to the PRA-CH family. As to quaternary structure, homodimer. Mg(2+) is required as a cofactor. Requires Zn(2+) as cofactor.

The protein resides in the cytoplasm. It catalyses the reaction 1-(5-phospho-beta-D-ribosyl)-5'-AMP + H2O = 1-(5-phospho-beta-D-ribosyl)-5-[(5-phospho-beta-D-ribosylamino)methylideneamino]imidazole-4-carboxamide. It participates in amino-acid biosynthesis; L-histidine biosynthesis; L-histidine from 5-phospho-alpha-D-ribose 1-diphosphate: step 3/9. Functionally, catalyzes the hydrolysis of the adenine ring of phosphoribosyl-AMP. The protein is Phosphoribosyl-AMP cyclohydrolase of Methylobacillus flagellatus (strain ATCC 51484 / DSM 6875 / VKM B-1610 / KT).